The chain runs to 923 residues: Alanine--tRNA ligase (923 aa).

Zn(2+) is bound by residues His614, His618, Cys717, and His721. Residues 884–903 (KVGGGGGGPPDFAQGGGPDA) form a disordered region. Residues 885–901 (VGGGGGGPPDFAQGGGP) show a composition bias toward gly residues.

The protein belongs to the class-II aminoacyl-tRNA synthetase family. The cofactor is Zn(2+).

The protein localises to the cytoplasm. The enzyme catalyses tRNA(Ala) + L-alanine + ATP = L-alanyl-tRNA(Ala) + AMP + diphosphate. In terms of biological role, catalyzes the attachment of alanine to tRNA(Ala) in a two-step reaction: alanine is first activated by ATP to form Ala-AMP and then transferred to the acceptor end of tRNA(Ala). Also edits incorrectly charged Ser-tRNA(Ala) and Gly-tRNA(Ala) via its editing domain. The polypeptide is Alanine--tRNA ligase (Haloquadratum walsbyi (strain DSM 16790 / HBSQ001)).